The sequence spans 634 residues: Chaperone protein HtpG (634 aa).

Residues 1 to 344 are a; substrate-binding; that stretch reads MNETVANNKE…SNDLPLNVSR (344 aa). The interval 345-561 is b; sequence EILQDNKVTQ…DFEMGTQMAK (217 aa). Positions 562–634 are c; the sequence is LLAAAGQAVP…TAINSLLTKG (73 aa).

The protein belongs to the heat shock protein 90 family. In terms of assembly, homodimer.

The protein resides in the cytoplasm. Functionally, molecular chaperone. Has ATPase activity. In Vibrio vulnificus (strain CMCP6), this protein is Chaperone protein HtpG.